The primary structure comprises 279 residues: MKVRFTKMQGLGNDFVVIDAVRQPVEPSPEQIRHIADRRYGVGCDQVLLATPARRSQADFGYLIFNPDGSQAEHCGNGVRCLARFLDDRGLVPAGRHELVIETINGLSRVRLCDDGPVTVDMGAPVLEPPHIPFRAPSRAREYELEVEGQVVRLGAVSMGNPHAVLRVDDVDSAPVETLGPAIESHSRFPRRVNVGFMQVLTPTHIRLRVYERGAGETLACGTGACAAVVSGRLRGWLEEAVDVDLPGGRLVIHWAGDGEHVWMTGPAETVFEGEIRLD.

Substrate is bound by residues Asn-13, Gln-46, and Asn-66. Cys-75 acts as the Proton donor in catalysis. Substrate is bound by residues 76 to 77 (GN), Asn-161, Asn-194, and 212 to 213 (ER). The active-site Proton acceptor is Cys-221. Residue 222 to 223 (GT) coordinates substrate.

It belongs to the diaminopimelate epimerase family. In terms of assembly, homodimer.

The protein resides in the cytoplasm. It carries out the reaction (2S,6S)-2,6-diaminopimelate = meso-2,6-diaminopimelate. It functions in the pathway amino-acid biosynthesis; L-lysine biosynthesis via DAP pathway; DL-2,6-diaminopimelate from LL-2,6-diaminopimelate: step 1/1. Catalyzes the stereoinversion of LL-2,6-diaminopimelate (L,L-DAP) to meso-diaminopimelate (meso-DAP), a precursor of L-lysine and an essential component of the bacterial peptidoglycan. In Alkalilimnicola ehrlichii (strain ATCC BAA-1101 / DSM 17681 / MLHE-1), this protein is Diaminopimelate epimerase.